A 389-amino-acid chain; its full sequence is Tubulin-like protein CetZ3 (389 aa).

GTP contacts are provided by residues 10–14 (QAGGK), 110–112 (GTG), glutamate 142, asparagine 169, and asparagine 187.

It belongs to the CetZ family.

It is found in the cytoplasm. In terms of biological role, involved in cell shape control. The protein is Tubulin-like protein CetZ3 of Haloferax volcanii (strain ATCC 29605 / DSM 3757 / JCM 8879 / NBRC 14742 / NCIMB 2012 / VKM B-1768 / DS2) (Halobacterium volcanii).